A 156-amino-acid polypeptide reads, in one-letter code: 6,7-dimethyl-8-ribityllumazine synthase (156 aa).

5-amino-6-(D-ribitylamino)uracil-binding positions include F25, 59-61, and 83-85; these read AFE and AVI. 88–89 lines the (2S)-2-hydroxy-3-oxobutyl phosphate pocket; that stretch reads AT. The Proton donor role is filled by H91. F116 provides a ligand contact to 5-amino-6-(D-ribitylamino)uracil. (2S)-2-hydroxy-3-oxobutyl phosphate is bound at residue R130.

The protein belongs to the DMRL synthase family.

The catalysed reaction is (2S)-2-hydroxy-3-oxobutyl phosphate + 5-amino-6-(D-ribitylamino)uracil = 6,7-dimethyl-8-(1-D-ribityl)lumazine + phosphate + 2 H2O + H(+). The protein operates within cofactor biosynthesis; riboflavin biosynthesis; riboflavin from 2-hydroxy-3-oxobutyl phosphate and 5-amino-6-(D-ribitylamino)uracil: step 1/2. Catalyzes the formation of 6,7-dimethyl-8-ribityllumazine by condensation of 5-amino-6-(D-ribitylamino)uracil with 3,4-dihydroxy-2-butanone 4-phosphate. This is the penultimate step in the biosynthesis of riboflavin. The protein is 6,7-dimethyl-8-ribityllumazine synthase of Nitratidesulfovibrio vulgaris (strain ATCC 29579 / DSM 644 / CCUG 34227 / NCIMB 8303 / VKM B-1760 / Hildenborough) (Desulfovibrio vulgaris).